Consider the following 375-residue polypeptide: 23S rRNA (uracil(747)-C(5))-methyltransferase RlmC (375 aa).

Residues C3, C11, C14, and C87 each contribute to the [4Fe-4S] cluster site. Residues Q212, F241, E262, and N307 each contribute to the S-adenosyl-L-methionine site. C334 (nucleophile) is an active-site residue.

The protein belongs to the class I-like SAM-binding methyltransferase superfamily. RNA M5U methyltransferase family. RlmC subfamily.

The catalysed reaction is uridine(747) in 23S rRNA + S-adenosyl-L-methionine = 5-methyluridine(747) in 23S rRNA + S-adenosyl-L-homocysteine + H(+). Its function is as follows. Catalyzes the formation of 5-methyl-uridine at position 747 (m5U747) in 23S rRNA. The sequence is that of 23S rRNA (uracil(747)-C(5))-methyltransferase RlmC from Escherichia coli O127:H6 (strain E2348/69 / EPEC).